Consider the following 162-residue polypeptide: uncharacterized protein (162 aa).

This is an uncharacterized protein from Bacillus subtilis (strain 168).